Reading from the N-terminus, the 288-residue chain is GCN5-related N-acetyltransferase 6, chloroplastic (288 aa).

The N-terminal 111 residues, 1-111 (MSTISIHRTE…YWTAAWLRAE (111 aa)), are a transit peptide targeting the chloroplast. One can recognise an N-acetyltransferase domain in the interval 151–288 (SCIVAVKKEE…DDTYLLQYTS (138 aa)). Residues 215-217 (LCV), 223-228 (RQGIAC), 254-256 (NSV), and Tyr261 contribute to the acetyl-CoA site. The active-site Proton donor is the Tyr261.

Belongs to the acetyltransferase family. GNAT subfamily. Oligomer. Post-translationally, autoacetylated. Expressed in green tissues and in roots.

It is found in the plastid. Its subcellular location is the chloroplast. It localises to the cytoplasm. The protein localises to the perinuclear region. It carries out the reaction an N-terminal L-alpha-aminoacyl-[protein] + acetyl-CoA = N-terminal N(alpha)-acetyl-L-alpha-aminoacyl-[protein] + CoA + H(+). It catalyses the reaction L-lysyl-[protein] + acetyl-CoA = N(6)-acetyl-L-lysyl-[protein] + CoA + H(+). The enzyme catalyses N-terminal L-alanyl-[protein] + acetyl-CoA = N-terminal N(alpha)-acetyl-L-alanyl-[protein] + CoA + H(+). The catalysed reaction is N-terminal L-seryl-[protein] + acetyl-CoA = N-terminal N(alpha)-acetyl-L-seryl-[protein] + CoA + H(+). It carries out the reaction N-terminal L-threonyl-[protein] + acetyl-CoA = N-terminal N(alpha)-acetyl-L-threonyl-[protein] + CoA + H(+). It catalyses the reaction N-terminal L-methionyl-[protein] + acetyl-CoA = N-terminal N(alpha)-acetyl-L-methionyl-[protein] + CoA + H(+). The enzyme catalyses N-terminal L-valyl-[protein] + acetyl-CoA = N-terminal N(alpha)-acetyl-L-valyl-[protein] + CoA + H(+). In terms of biological role, protein acetyltransferase with dual specificity triggering both N-alpha-acetylation (NTA), with a large spectrum of modified N-termini, including methionine, alanine, serine, threonine and to a lower extent valine as substrates, and epsilon-lysine acetylation (KA). The sequence is that of GCN5-related N-acetyltransferase 6, chloroplastic from Arabidopsis thaliana (Mouse-ear cress).